The primary structure comprises 314 residues: Serine/threonine-protein phosphatase PP-Y (314 aa).

Positions 60, 62, 88, and 120 each coordinate Mn(2+). Residue histidine 121 is the Proton donor of the active site. Mn(2+)-binding residues include histidine 169 and histidine 244.

It belongs to the PPP phosphatase family. PP-Y subfamily. Mn(2+) is required as a cofactor.

It carries out the reaction O-phospho-L-seryl-[protein] + H2O = L-seryl-[protein] + phosphate. It catalyses the reaction O-phospho-L-threonyl-[protein] + H2O = L-threonyl-[protein] + phosphate. This is Serine/threonine-protein phosphatase PP-Y (PpY-55A) from Drosophila melanogaster (Fruit fly).